Consider the following 243-residue polypeptide: Triosephosphate isomerase (243 aa).

Residue 9-11 participates in substrate binding; it reads NWK. Histidine 96 (electrophile) is an active-site residue. The Proton acceptor role is filled by glutamate 165. Residues glycine 171, serine 204, and 225 to 226 each bind substrate; that span reads GG.

The protein belongs to the triosephosphate isomerase family. As to quaternary structure, homodimer.

It is found in the cytoplasm. The enzyme catalyses D-glyceraldehyde 3-phosphate = dihydroxyacetone phosphate. The protein operates within carbohydrate biosynthesis; gluconeogenesis. It participates in carbohydrate degradation; glycolysis; D-glyceraldehyde 3-phosphate from glycerone phosphate: step 1/1. Involved in the gluconeogenesis. Catalyzes stereospecifically the conversion of dihydroxyacetone phosphate (DHAP) to D-glyceraldehyde-3-phosphate (G3P). In Prochlorococcus marinus (strain MIT 9211), this protein is Triosephosphate isomerase.